The sequence spans 417 residues: Type II methyltransferase M.KpnI (417 aa).

Belongs to the N(4)/N(6)-methyltransferase family.

It carries out the reaction a 2'-deoxyadenosine in DNA + S-adenosyl-L-methionine = an N(6)-methyl-2'-deoxyadenosine in DNA + S-adenosyl-L-homocysteine + H(+). Functionally, a beta subtype methylase, recognizes the double-stranded sequence 5'-GGTACC-3', methylates A-4 on both strands, and protects the DNA from cleavage by the KpnI endonuclease. The chain is Type II methyltransferase M.KpnI from Klebsiella pneumoniae.